The primary structure comprises 273 residues: MSEIVKFNPVMASGFGAYIDHRDFLEAKTETIKNLLMRQGFVVVKNLDIDSDTFRDIYSAYGTIVEYADEKIGVGFGYRDTLKLEGEKGKIVTGRGQLPFHADGGLLLSQVDQVFLYAAEIKNVKFRGATTVCDHALACQEMPAHLLRVLEEETFEVRVLERGYYVDVSPDGWFKVPVFTDLGWVRKMLIYFPFDEGQPASWEPRIVGFTDHETQAFFQELGAFLKQPRYYYKHFWEDGDLLIMDNRRVIHEREEFNDDDIVRRLYRGQTADI.

Fe cation is bound by residues histidine 101 and aspartate 103. Glycine 104 is a binding site for substrate. Threonine 130 lines the 2-oxoglutarate pocket. Histidine 251 contacts Fe cation. Residues arginine 253, arginine 263, and arginine 267 each contribute to the 2-oxoglutarate site.

The protein belongs to the TfdA dioxygenase family. Homohexamer. Dimer of trimers. It depends on Fe(2+) as a cofactor.

The protein resides in the cytoplasm. The catalysed reaction is (3S,5S)-carbapenam-3-caboxylate + 2-oxoglutarate + O2 = (5R)-carbapenem-3-carboxylate + succinate + CO2 + H2O. Its activity is regulated as follows. Inhibited by L-N-acetylproline and by D-N-acetylproline. Catalyzes the Fe(2+) and alpha-ketoglutarate-dependent conversion of (3S,5S)-carbapenam to (5R)-carbapenem, an essential step in carbapenem antibiotic biosynthesis. The polypeptide is (5R)-carbapenem-3-carboxylate synthase (carC) (Pectobacterium carotovorum subsp. carotovorum (Erwinia carotovora subsp. carotovora)).